The chain runs to 470 residues: Probable glycosyltransferase At3g07620 (470 aa).

At 1–7 (MRDYIPK) the chain is on the cytoplasmic side. A helical; Signal-anchor membrane pass occupies residues 8–28 (YLNAFLLAFATFAVGFAIFIA). Topologically, residues 29–470 (KDSNSSSHLY…WLRRLNVKLL (442 aa)) are lumenal. Residues asparagine 32, asparagine 73, asparagine 105, asparagine 236, asparagine 274, and asparagine 299 are each glycosylated (N-linked (GlcNAc...) asparagine).

The protein belongs to the glycosyltransferase 47 family.

It localises to the golgi apparatus membrane. May be involved in cell wall biosynthesis. The polypeptide is Probable glycosyltransferase At3g07620 (Arabidopsis thaliana (Mouse-ear cress)).